The primary structure comprises 373 residues: tRNA-specific 2-thiouridylase MnmA (373 aa).

Residues Ala7–Ser14 and Leu33 contribute to the ATP site. The Nucleophile role is filled by Cys101. An intrachain disulfide couples Cys101 to Cys215. Position 125 (Gly125) interacts with ATP. Residues Lys165–Gln167 form an interaction with tRNA region. Residue Cys215 is the Cysteine persulfide intermediate of the active site.

This sequence belongs to the MnmA/TRMU family.

It localises to the cytoplasm. The enzyme catalyses S-sulfanyl-L-cysteinyl-[protein] + uridine(34) in tRNA + AH2 + ATP = 2-thiouridine(34) in tRNA + L-cysteinyl-[protein] + A + AMP + diphosphate + H(+). Functionally, catalyzes the 2-thiolation of uridine at the wobble position (U34) of tRNA, leading to the formation of s(2)U34. This chain is tRNA-specific 2-thiouridylase MnmA, found in Roseiflexus sp. (strain RS-1).